Here is a 406-residue protein sequence, read N- to C-terminus: Putative permease Rv2963 (406 aa).

Transmembrane regions (helical) follow at residues tryptophan 30–valine 50, leucine 67–leucine 87, leucine 111–glutamate 131, phenylalanine 132–alanine 152, leucine 208–valine 228, alanine 246–glycine 266, glycine 278–leucine 298, valine 312–phenylalanine 332, and valine 361–proline 381.

The protein belongs to the UPF0718 family.

The protein localises to the cell membrane. The chain is Putative permease Rv2963 from Mycobacterium tuberculosis (strain ATCC 25618 / H37Rv).